Reading from the N-terminus, the 307-residue chain is Elongation factor Ts (307 aa).

Positions 80–83 (TDFV) are involved in Mg(2+) ion dislocation from EF-Tu.

The protein belongs to the EF-Ts family.

The protein resides in the cytoplasm. Associates with the EF-Tu.GDP complex and induces the exchange of GDP to GTP. It remains bound to the aminoacyl-tRNA.EF-Tu.GTP complex up to the GTP hydrolysis stage on the ribosome. The chain is Elongation factor Ts from Methylobacterium sp. (strain 4-46).